The sequence spans 76 residues: Exodeoxyribonuclease 7 small subunit (76 aa).

It belongs to the XseB family. In terms of assembly, heterooligomer composed of large and small subunits.

It is found in the cytoplasm. It carries out the reaction Exonucleolytic cleavage in either 5'- to 3'- or 3'- to 5'-direction to yield nucleoside 5'-phosphates.. Bidirectionally degrades single-stranded DNA into large acid-insoluble oligonucleotides, which are then degraded further into small acid-soluble oligonucleotides. This chain is Exodeoxyribonuclease 7 small subunit, found in Geobacter metallireducens (strain ATCC 53774 / DSM 7210 / GS-15).